A 353-amino-acid polypeptide reads, in one-letter code: Histidinol-phosphate aminotransferase (353 aa).

An N6-(pyridoxal phosphate)lysine modification is found at K211.

Belongs to the class-II pyridoxal-phosphate-dependent aminotransferase family. Histidinol-phosphate aminotransferase subfamily. As to quaternary structure, homodimer. The cofactor is pyridoxal 5'-phosphate.

The catalysed reaction is L-histidinol phosphate + 2-oxoglutarate = 3-(imidazol-4-yl)-2-oxopropyl phosphate + L-glutamate. It functions in the pathway amino-acid biosynthesis; L-histidine biosynthesis; L-histidine from 5-phospho-alpha-D-ribose 1-diphosphate: step 7/9. The polypeptide is Histidinol-phosphate aminotransferase (Marinomonas sp. (strain MWYL1)).